The sequence spans 368 residues: 1-deoxy-D-xylulose 5-phosphate reductoisomerase (368 aa).

NADPH is bound by residues Thr7, Gly8, Ser9, Ile10, Gly31, Lys32, Asn33, and Asn113. Lys114 contacts 1-deoxy-D-xylulose 5-phosphate. Glu115 is a binding site for NADPH. Asp133 is a Mn(2+) binding site. Ser134, Glu135, Ser158, and His181 together coordinate 1-deoxy-D-xylulose 5-phosphate. Glu135 lines the Mn(2+) pocket. Position 187 (Gly187) interacts with NADPH. 4 residues coordinate 1-deoxy-D-xylulose 5-phosphate: Ser194, Asn199, Lys200, and Glu203. Glu203 lines the Mn(2+) pocket.

The protein belongs to the DXR family. Mg(2+) is required as a cofactor. The cofactor is Mn(2+).

The enzyme catalyses 2-C-methyl-D-erythritol 4-phosphate + NADP(+) = 1-deoxy-D-xylulose 5-phosphate + NADPH + H(+). It functions in the pathway isoprenoid biosynthesis; isopentenyl diphosphate biosynthesis via DXP pathway; isopentenyl diphosphate from 1-deoxy-D-xylulose 5-phosphate: step 1/6. Catalyzes the NADPH-dependent rearrangement and reduction of 1-deoxy-D-xylulose-5-phosphate (DXP) to 2-C-methyl-D-erythritol 4-phosphate (MEP). The sequence is that of 1-deoxy-D-xylulose 5-phosphate reductoisomerase from Helicobacter pylori (strain P12).